Here is a 194-residue protein sequence, read N- to C-terminus: MSSMETEKGAVPTPQAPPVAPTDNKYRVVDVILRVLLLAASIASVVLMVTSKQTEIIVSPFGSRPNAAKFQNSPAFIYLVAALSVAGLYSIITALVSLSYMRKPIVPPKLFWILLIHDVLLLGIVAAATGTAGGVGYIGLKGNTHVRWGKIRNVYDKFCRHVGASIIVSLFAAAVLVLLVFVNANSLYRRIPKY.

Topologically, residues 1–27 (MSSMETEKGAVPTPQAPPVAPTDNKYR) are cytoplasmic. Residues 28 to 48 (VVDVILRVLLLAASIASVVLM) form a helical membrane-spanning segment. Residues 49–75 (VTSKQTEIIVSPFGSRPNAAKFQNSPA) lie on the Extracellular side of the membrane. Residues 76-96 (FIYLVAALSVAGLYSIITALV) traverse the membrane as a helical segment. At 97-109 (SLSYMRKPIVPPK) the chain is on the cytoplasmic side. A helical membrane pass occupies residues 110–130 (LFWILLIHDVLLLGIVAAATG). Over 131–161 (TAGGVGYIGLKGNTHVRWGKIRNVYDKFCRH) the chain is Extracellular. A helical transmembrane segment spans residues 162 to 182 (VGASIIVSLFAAAVLVLLVFV). The Cytoplasmic portion of the chain corresponds to 183–194 (NANSLYRRIPKY).

It belongs to the Casparian strip membrane proteins (CASP) family. Homodimer and heterodimers.

Its subcellular location is the cell membrane. The polypeptide is CASP-like protein Ni6 (Ni6) (Beta vulgaris subsp. maritima (Sea beet)).